The primary structure comprises 777 residues: Shutoff protein (777 aa).

2 disordered regions span residues 1 to 55 (MEED…SVPV) and 261 to 283 (PLDS…DDDL). Polar residues predominate over residues 9–20 (QPDSETLTSPTS). Residues 250 to 314 (VMDHLLIKRV…VILVTVELEC (65 aa)) are binding to host EIF4G. In terms of domain architecture, RRM spans 317–435 (RFFANPQTLR…ELWTAFSERT (119 aa)). A phosphotyrosine; by host mark is found at Tyr334 and Tyr649. Residues 652–777 (PQTGEELNTP…AAARLVESQP (126 aa)) are disordered. The segment covering 656–665 (EELNTPSPSA) has biased composition (polar residues). Residues 728-738 (GAGGQTPQGRG) are compositionally biased toward gly residues. Positions 753-763 (TRSEPASDGES) are enriched in basic and acidic residues.

The protein belongs to the adenoviridae shutoff protein family. As to quaternary structure, monomer. Interacts with hexon protein; this interaction allows chaperoning and trimerization of hexon proteins. Interacts (via N-terminus) with host initiation factor EIF4G (via C-terminus). Interacts (via RRM domain) with viral mRNAs that contain the tripartite leader; this interaction allows ribosome shunting and expression of viral late mRNAs. Might be cleaved by the viral protease. Post-translationally, phosphorylated. Tyrosine phosphorylation enhances preferential binding to tripartite leader mRNAs and allows ribosome shunting. In terms of processing, methylated. Asymmetric dimethylation by host PRMT1 of the Arg/Gly-rich region may regulate shutoff protein binding to hexon and promote the capsid assembly in the nucleus.

The protein localises to the host cytoplasm. Protein that inhibits host translation while promoting late viral translation by ribosome shunting. Blocks host cap-dependent translation by binding to eIF4G, displacing MKNK1 from cap initiation complexes and preventing EIF4E phosphorylation. Binds to the tripartite leader sequence of viral late mRNAs and recruits host eIF4G, PABPC1/poly-A binding protein and 40S ribosomes subunits on viral mRNAs, allowing ribosome shunting and efficient translation of late viral mRNAs even though conventional translation via ribosome scanning from the cap has been shut off in the host cell. During assembly, acts as a chaperone protein that helps hexon proteins assembly into trimers. The sequence is that of Shutoff protein from Homo sapiens (Human).